Reading from the N-terminus, the 128-residue chain is Large ribosomal subunit protein bL12 (128 aa).

This sequence belongs to the bacterial ribosomal protein bL12 family. As to quaternary structure, homodimer. Part of the ribosomal stalk of the 50S ribosomal subunit. Forms a multimeric L10(L12)X complex, where L10 forms an elongated spine to which 2 to 4 L12 dimers bind in a sequential fashion. Binds GTP-bound translation factors.

Functionally, forms part of the ribosomal stalk which helps the ribosome interact with GTP-bound translation factors. Is thus essential for accurate translation. The chain is Large ribosomal subunit protein bL12 from Trichormus variabilis (strain ATCC 29413 / PCC 7937) (Anabaena variabilis).